The chain runs to 261 residues: Calbindin (261 aa).

A2 bears the N-acetylalanine mark. The interaction with RANBP9 stretch occupies residues 2–7; that stretch reads AESHLQ. EF-hand domains lie at 11–46, 53–88, 98–133, 142–177, and 186–221; these read ITASQFFEIWLHFDADGSGYLEGKELQNLIQELQQA, ELSPEMKTFVDQYGQRDDGKIGIVELAHVLPTEENF, KSCEEFMKTWRKYDTDHSGFIETEELKNFLKDLLEK, KLAEYTDLMLKLFDSNNDGKLELTEMARLLPVQENF, and MCGKEFNKAFELYDQDGNGYIDENELDALLKDLCEK. Ca(2+)-binding residues include D24, D26, S28, Y30, and E35. Ca(2+)-binding residues include D111, D113, S115, E122, D155, N157, D159, K161, E166, D199, D201, N203, Y205, and E210.

The protein belongs to the calbindin family. As to quaternary structure, interacts with RANBP9.

Its function is as follows. Buffers cytosolic calcium. May stimulate a membrane Ca(2+)-ATPase and a 3',5'-cyclic nucleotide phosphodiesterase. The protein is Calbindin (CALB1) of Homo sapiens (Human).